Here is a 197-residue protein sequence, read N- to C-terminus: Pyridoxal 5'-phosphate synthase subunit PdxT (197 aa).

Residue Gly-52–Ser-54 coordinates L-glutamine. Cys-84 functions as the Nucleophile in the catalytic mechanism. Residues Arg-116 and Ile-143–Arg-144 each bind L-glutamine. Catalysis depends on charge relay system residues His-179 and Glu-181.

This sequence belongs to the glutaminase PdxT/SNO family. As to quaternary structure, in the presence of PdxS, forms a dodecamer of heterodimers. Only shows activity in the heterodimer.

The enzyme catalyses aldehydo-D-ribose 5-phosphate + D-glyceraldehyde 3-phosphate + L-glutamine = pyridoxal 5'-phosphate + L-glutamate + phosphate + 3 H2O + H(+). The catalysed reaction is L-glutamine + H2O = L-glutamate + NH4(+). Its pathway is cofactor biosynthesis; pyridoxal 5'-phosphate biosynthesis. Functionally, catalyzes the hydrolysis of glutamine to glutamate and ammonia as part of the biosynthesis of pyridoxal 5'-phosphate. The resulting ammonia molecule is channeled to the active site of PdxS. This is Pyridoxal 5'-phosphate synthase subunit PdxT from Ignicoccus hospitalis (strain KIN4/I / DSM 18386 / JCM 14125).